A 467-amino-acid polypeptide reads, in one-letter code: UDP-N-acetylmuramoylalanine--D-glutamate ligase (467 aa).

121–127 (GTNGKST) serves as a coordination point for ATP.

The protein belongs to the MurCDEF family.

The protein localises to the cytoplasm. It catalyses the reaction UDP-N-acetyl-alpha-D-muramoyl-L-alanine + D-glutamate + ATP = UDP-N-acetyl-alpha-D-muramoyl-L-alanyl-D-glutamate + ADP + phosphate + H(+). The protein operates within cell wall biogenesis; peptidoglycan biosynthesis. Its function is as follows. Cell wall formation. Catalyzes the addition of glutamate to the nucleotide precursor UDP-N-acetylmuramoyl-L-alanine (UMA). The sequence is that of UDP-N-acetylmuramoylalanine--D-glutamate ligase from Brucella abortus (strain 2308).